The primary structure comprises 774 residues: 5-methyltetrahydropteroyltriglutamate--homocysteine methyltransferase (774 aa).

5-methyltetrahydropteroyltri-L-glutamate is bound by residues 23–26 (RELK) and lysine 123. Residues 446–448 (IGS) and glutamate 499 each bind L-homocysteine. L-methionine is bound by residues 446–448 (IGS) and glutamate 499. Residues 530 to 531 (RC) and tryptophan 576 contribute to the 5-methyltetrahydropteroyltri-L-glutamate site. Residue aspartate 614 participates in L-homocysteine binding. Aspartate 614 is a binding site for L-methionine. 5-methyltetrahydropteroyltri-L-glutamate is bound at residue glutamate 620. Histidine 656, cysteine 658, and glutamate 680 together coordinate Zn(2+). Histidine 709 (proton donor) is an active-site residue. Cysteine 741 is a Zn(2+) binding site.

It belongs to the vitamin-B12 independent methionine synthase family. The cofactor is Zn(2+).

The enzyme catalyses 5-methyltetrahydropteroyltri-L-glutamate + L-homocysteine = tetrahydropteroyltri-L-glutamate + L-methionine. It participates in amino-acid biosynthesis; L-methionine biosynthesis via de novo pathway; L-methionine from L-homocysteine (MetE route): step 1/1. Functionally, catalyzes the transfer of a methyl group from 5-methyltetrahydrofolate to homocysteine resulting in methionine formation. The polypeptide is 5-methyltetrahydropteroyltriglutamate--homocysteine methyltransferase (Aliivibrio fischeri (strain ATCC 700601 / ES114) (Vibrio fischeri)).